The primary structure comprises 893 residues: TBC domain-containing protein kinase-like protein (893 aa).

Residues 1–273 (MFPLKDAEMG…PDQLMKDKVF (273 aa)) form the Protein kinase domain. Positions 466-651 (DIPPLMRGLT…HLWDTLLLGN (186 aa)) constitute a Rab-GAP TBC domain. The tract at residues 710–749 (YRQHAQPPKPSSDSSGGRSSAPYFSAECPDPPKTDLSRES) is disordered. The segment covering 720–729 (SSDSSGGRSS) has biased composition (low complexity). The region spanning 790–889 (SKPKLLVVDI…IKPTGLLTIP (100 aa)) is the Rhodanese domain.

This sequence belongs to the protein kinase superfamily. As to quaternary structure, component of the FERRY complex composed of five subunits, TBCK, PPP1R21, FERRY3, CRYZL1 and GATD1 with a ratio of 1:2:1:2:4, respectively.

It is found in the cytoplasm. Its subcellular location is the cytoskeleton. It localises to the spindle. The protein localises to the midbody. The protein resides in the early endosome. Component of the FERRY complex (Five-subunit Endosomal Rab5 and RNA/ribosome intermediary). The FERRY complex directly interacts with mRNAs and RAB5A, and functions as a RAB5A effector involved in the localization and the distribution of specific mRNAs most likely by mediating their endosomal transport. The complex recruits mRNAs and ribosomes to early endosomes through direct mRNA-interaction. Also involved in the modulation of mTOR signaling and expression of mTOR complex components. Involved in the control of actin-cytoskeleton organization. The polypeptide is TBC domain-containing protein kinase-like protein (Homo sapiens (Human)).